Reading from the N-terminus, the 245-residue chain is Enolase-phosphatase E1 (245 aa).

The protein belongs to the HAD-like hydrolase superfamily. MasA/MtnC family. Monomer. Mg(2+) is required as a cofactor.

The catalysed reaction is 5-methylsulfanyl-2,3-dioxopentyl phosphate + H2O = 1,2-dihydroxy-5-(methylsulfanyl)pent-1-en-3-one + phosphate. It functions in the pathway amino-acid biosynthesis; L-methionine biosynthesis via salvage pathway; L-methionine from S-methyl-5-thio-alpha-D-ribose 1-phosphate: step 3/6. The protein operates within amino-acid biosynthesis; L-methionine biosynthesis via salvage pathway; L-methionine from S-methyl-5-thio-alpha-D-ribose 1-phosphate: step 4/6. Bifunctional enzyme that catalyzes the enolization of 2,3-diketo-5-methylthiopentyl-1-phosphate (DK-MTP-1-P) into the intermediate 2-hydroxy-3-keto-5-methylthiopentenyl-1-phosphate (HK-MTPenyl-1-P), which is then dephosphorylated to form the acireductone 1,2-dihydroxy-3-keto-5-methylthiopentene (DHK-MTPene). This is Enolase-phosphatase E1 from Synechococcus sp. (strain CC9902).